A 167-amino-acid chain; its full sequence is Mannose-specific lectin (167 aa).

A signal peptide spans 1-24; the sequence is MAFSISSTMIFLLSLALFSTLVSA. One can recognise a Bulb-type lectin domain in the interval 25–138; the sequence is DNHLLPGERL…PIFATGTNRF (114 aa). Cysteine 53 and cysteine 76 are oxidised to a cystine.

As to quaternary structure, homotetramer. In terms of tissue distribution, expressed in the pseudobulb, with highest levels of expression in the non-swollen internode (at protein level).

It is found in the secreted. Functionally, mannose-specific lectin. Shows agglutinating activity towards chicken erythrocytes. Has antifungal activity against A.alternata and Collectotrichum species. The chain is Mannose-specific lectin from Dendrobium findlayanum (Findlay's orchid).